The following is a 723-amino-acid chain: Threonine--tRNA ligase, mitochondrial (723 aa).

The residue at position 57 (Ser-57) is a Phosphoserine. The 63-residue stretch at 64–126 (RTIKISLPEG…ETDCHLRFLT (63 aa)) folds into the TGS domain.

This sequence belongs to the class-II aminoacyl-tRNA synthetase family. As to quaternary structure, homodimer.

Its subcellular location is the mitochondrion matrix. It catalyses the reaction tRNA(Thr) + L-threonine + ATP = L-threonyl-tRNA(Thr) + AMP + diphosphate + H(+). Catalyzes the attachment of threonine to tRNA(Thr) in a two-step reaction: threonine is first activated by ATP to form Thr-AMP and then transferred to the acceptor end of tRNA(Thr). Also edits incorrectly charged tRNA(Thr) via its editing domain. This Rattus norvegicus (Rat) protein is Threonine--tRNA ligase, mitochondrial (Tars2).